The sequence spans 269 residues: MSIPAFTVVIPARLASTRLPNKPLADIGGHPMIVRVAERAHASSAQRTVVATDAPAVAEACAAHGIDAVLTRADHPSGTDRLAEVAAQLALPDDAIVVNVQGDEPLIDPQLIDDVAMHLAHHADCAIATAAHALHDVAEVFNPNVVKVVCDAGGRALYFSRAPIPWSRDDWAGVPAVPASAAQVPLPAMPVLRHIGLYAYRAGFLRRFPTMAAAPLEQTEALEQLRAMWHGERIAVLETAAAPAPGVDTAADLERVRALWAQGMAQEGP.

It belongs to the KdsB family.

The protein localises to the cytoplasm. It carries out the reaction 3-deoxy-alpha-D-manno-oct-2-ulosonate + CTP = CMP-3-deoxy-beta-D-manno-octulosonate + diphosphate. Its pathway is nucleotide-sugar biosynthesis; CMP-3-deoxy-D-manno-octulosonate biosynthesis; CMP-3-deoxy-D-manno-octulosonate from 3-deoxy-D-manno-octulosonate and CTP: step 1/1. The protein operates within bacterial outer membrane biogenesis; lipopolysaccharide biosynthesis. Activates KDO (a required 8-carbon sugar) for incorporation into bacterial lipopolysaccharide in Gram-negative bacteria. This is 3-deoxy-manno-octulosonate cytidylyltransferase from Cupriavidus pinatubonensis (strain JMP 134 / LMG 1197) (Cupriavidus necator (strain JMP 134)).